The following is a 332-amino-acid chain: Polygalacturonase inhibitor 1 (332 aa).

Positions 1–24 (MASTASFMLAVLLAVAVAAAPARA) are cleaved as a signal peptide. 2 disulfide bridges follow: Cys-27–Cys-58 and Cys-59–Cys-66. 10 LRR repeats span residues 72–96 (VNNVFIDGANDVRGQIPSAVAGLTA), 97–118 (LMSLSLFRLPGLSGPIPACLTA), 119–142 (LSNLQFLTISHTNVSGVIPDSLAR), 143–166 (IRSLDSVDLSHNSLTGPIPNSFSD), 167–192 (LPNLRSLDLRSNKLTGCIPAGLVQGQ), 193–215 (FRSLILSYNQLTGPIPRDDAQDE), 216–236 (INTVDLSHNRLTGDASFLFAA), 237–259 (GRPIGKVDLSWNDLDFDLSKLVF), 260–283 (PPELTYLDLSHNRIRGTVPRSLAA), and 284–310 (LSTLQTLDLSYNRLCGPLPRLHGVIRH). Asn-131 carries N-linked (GlcNAc...) asparagine glycosylation. Disulfide bonds link Cys-298-Cys-312, Cys-298-Cys-320, and Cys-320-Cys-329.

This sequence belongs to the polygalacturonase-inhibiting protein family. As to expression, highly expressed in calli, immature and mature panicles, and in three inner floral organs: lodicules, stamens and carpels. Expressed at low level in seedling roots and mature stems.

It localises to the secreted. Its subcellular location is the cell wall. Its function is as follows. Inhibitor of fungal polygalacturonase. Regulates floral organ number. This chain is Polygalacturonase inhibitor 1, found in Oryza sativa subsp. japonica (Rice).